The following is a 208-amino-acid chain: Redox-sensing transcriptional repressor Rex (208 aa).

A DNA-binding region (H-T-H motif) is located at residues 16–55 (VYSRYLENLYRKGITTVSSADIAQGVGVTSAQVRKDLAYF). Residue 90-95 (GAGNLG) participates in NAD(+) binding.

Belongs to the transcriptional regulatory Rex family. In terms of assembly, homodimer.

The protein localises to the cytoplasm. Modulates transcription in response to changes in cellular NADH/NAD(+) redox state. The sequence is that of Redox-sensing transcriptional repressor Rex from Carboxydothermus hydrogenoformans (strain ATCC BAA-161 / DSM 6008 / Z-2901).